Reading from the N-terminus, the 595-residue chain is Elongation factor 4 (595 aa).

A tr-type G domain is found at 2–184; it reads KNIRNFSIIA…QIVEKIPAPK (183 aa). GTP-binding positions include 14–19 and 131–134; these read DHGKST and NKID.

This sequence belongs to the TRAFAC class translation factor GTPase superfamily. Classic translation factor GTPase family. LepA subfamily.

It localises to the cell inner membrane. It carries out the reaction GTP + H2O = GDP + phosphate + H(+). Functionally, required for accurate and efficient protein synthesis under certain stress conditions. May act as a fidelity factor of the translation reaction, by catalyzing a one-codon backward translocation of tRNAs on improperly translocated ribosomes. Back-translocation proceeds from a post-translocation (POST) complex to a pre-translocation (PRE) complex, thus giving elongation factor G a second chance to translocate the tRNAs correctly. Binds to ribosomes in a GTP-dependent manner. This is Elongation factor 4 from Ruthia magnifica subsp. Calyptogena magnifica.